Reading from the N-terminus, the 331-residue chain is Inner membrane ABC transporter permease protein YjfF (331 aa).

The Cytoplasmic portion of the chain corresponds to 1 to 5 (MIKRN). Residues 6 to 26 (LPLMITIGVFVLGYLYCLTQF) form a helical membrane-spanning segment. Over 27–42 (PGFASTRVICNILTDN) the chain is Periplasmic. Residues 43 to 63 (AFLGIIAVGMTFVILSGGIDL) traverse the membrane as a helical segment. Residues 64–88 (SVGSVIAFTGVFLAKVIGDFGLSPL) are Cytoplasmic-facing. The chain crosses the membrane as a helical span at residues 89 to 109 (LAFPLVLVMGCAFGAFMGLLI). The Periplasmic portion of the chain corresponds to 110 to 113 (DALK). A helical membrane pass occupies residues 114 to 134 (IPAFIITLAGMFFLRGVSYLV). Residues 135–159 (SEESIPINHPIYDTLSSLAWKIPGG) lie on the Cytoplasmic side of the membrane. The helical transmembrane segment at 160–180 (GRLSAMGLLMLAVVVIGIFLA) threads the bilayer. Over 181 to 222 (HRTRFGNQVYAIGGNATSANLMGISTRSTTIRIYMLSTGLAT) the chain is Periplasmic. Residues 223-243 (LAGIVFSIYTQAGYALAGVGV) traverse the membrane as a helical segment. The Cytoplasmic segment spans residues 244-250 (ELDAIAS). A helical membrane pass occupies residues 251–271 (VVIGGTLLSGGVGTVLGTLFG). The Periplasmic segment spans residues 272 to 294 (VAIQGLIQTYINFDGTLSSWWTK). Residues 295–315 (IAIGILLFIFIALQRGLTVLW) traverse the membrane as a helical segment. The Cytoplasmic portion of the chain corresponds to 316-331 (ENRQSSPVTRVNIAQQ).

Belongs to the binding-protein-dependent transport system permease family. AraH/RbsC subfamily. As to quaternary structure, the complex is composed of two ATP-binding proteins (YtfR), two transmembrane proteins (YtfT and YjfF) and a solute-binding protein (YtfQ).

It localises to the cell inner membrane. Its function is as follows. Part of the ABC transporter complex YtfQRT-YjfF involved in galactofuranose transport. Probably responsible for the translocation of the substrate across the membrane. In Escherichia coli (strain K12), this protein is Inner membrane ABC transporter permease protein YjfF (yjfF).